The following is a 69-amino-acid chain: MKEGIHLTYYHDAVVRCACGETFITGSTKKEIHVEICSKCHPFFTGKQKFVDTTGRVERFMKKYGLDQK.

Zn(2+) contacts are provided by cysteine 17, cysteine 19, cysteine 37, and cysteine 40.

It belongs to the bacterial ribosomal protein bL31 family. Type A subfamily. Part of the 50S ribosomal subunit. It depends on Zn(2+) as a cofactor.

In terms of biological role, binds the 23S rRNA. In Caldicellulosiruptor saccharolyticus (strain ATCC 43494 / DSM 8903 / Tp8T 6331), this protein is Large ribosomal subunit protein bL31.